The chain runs to 170 residues: 3-hydroxydecanoyl-[acyl-carrier-protein] dehydratase (170 aa).

The active site involves H69.

Belongs to the thioester dehydratase family. FabA subfamily. As to quaternary structure, homodimer.

Its subcellular location is the cytoplasm. It carries out the reaction a (3R)-hydroxyacyl-[ACP] = a (2E)-enoyl-[ACP] + H2O. The catalysed reaction is (3R)-hydroxydecanoyl-[ACP] = (2E)-decenoyl-[ACP] + H2O. The enzyme catalyses (2E)-decenoyl-[ACP] = (3Z)-decenoyl-[ACP]. Its pathway is lipid metabolism; fatty acid biosynthesis. Functionally, necessary for the introduction of cis unsaturation into fatty acids. Catalyzes the dehydration of (3R)-3-hydroxydecanoyl-ACP to E-(2)-decenoyl-ACP and then its isomerization to Z-(3)-decenoyl-ACP. Can catalyze the dehydratase reaction for beta-hydroxyacyl-ACPs with saturated chain lengths up to 16:0, being most active on intermediate chain length. The sequence is that of 3-hydroxydecanoyl-[acyl-carrier-protein] dehydratase from Idiomarina loihiensis (strain ATCC BAA-735 / DSM 15497 / L2-TR).